A 164-amino-acid polypeptide reads, in one-letter code: Peptide deformylase (164 aa).

2 residues coordinate Fe cation: Cys-87 and His-129. Residue Glu-130 is part of the active site. His-133 serves as a coordination point for Fe cation.

It belongs to the polypeptide deformylase family. Fe(2+) is required as a cofactor.

The enzyme catalyses N-terminal N-formyl-L-methionyl-[peptide] + H2O = N-terminal L-methionyl-[peptide] + formate. In terms of biological role, removes the formyl group from the N-terminal Met of newly synthesized proteins. Requires at least a dipeptide for an efficient rate of reaction. N-terminal L-methionine is a prerequisite for activity but the enzyme has broad specificity at other positions. The protein is Peptide deformylase of Thermotoga sp. (strain RQ2).